The primary structure comprises 427 residues: Delta(14)-sterol reductase (427 aa).

Over 1-25 (MSEQESRDNAAVDAVRQKYGFGFSW) the chain is Cytoplasmic. Residues 26-46 (LVLMIALPPLVYYLWICVTYY) form a helical membrane-spanning segment. Residues 47-70 (QGELVFTSDAAAWRRFWSHVAPPT) are Periplasmic-facing. A helical membrane pass occupies residues 71–91 (WHAAGLYAAWFLGQAALQVWA). The Cytoplasmic segment spans residues 92-110 (PGPTVQGMKLPDGSRLDYR). A helical transmembrane segment spans residues 111–131 (MNGIFSFLFTLAVVFGLVTMG). The Periplasmic portion of the chain corresponds to 132–141 (WLDATVLYDQ). Residues 142 to 162 (LGPLLTVVNIFTFVFAGFLYF) traverse the membrane as a helical segment. At 163–197 (WGLNGKQWERPTGRPFYDYFMGTALNPRIGSLDLK) the chain is on the cytoplasmic side. A helical transmembrane segment spans residues 198-218 (LFCEARPGMIFWLLMNLSMAA). At 219 to 226 (KQYELHGT) the chain is on the periplasmic side. Residues 227–247 (VTVPMLLVVGFQSFYLIDYFI) form a helical membrane-spanning segment. At 248–262 (HEEAVLTTWDIKHEK) the chain is on the cytoplasmic side. Residues 263–283 (FGWMLCWGDLVWLPFTYTLQA) form a helical membrane-spanning segment. The Periplasmic portion of the chain corresponds to 284–291 (QYLVHHTH). A helical transmembrane segment spans residues 292-312 (DLPVWGIIAIVALNLAGYAIF). Residues 313-356 (RGANIQKHHFRRDPNRIVWGKPAKYIKTKQGSLLLTSGWWGIAR) are Cytoplasmic-facing. Residues lysine 319, arginine 323, leucine 347, tryptophan 352, and 359 to 360 (NY) each bind NADP(+). A helical transmembrane segment spans residues 357–377 (HMNYFGDLMIALSWCLPAAFG). Residue serine 378 is a topological domain, periplasmic. A helical membrane pass occupies residues 379-399 (PIPYFHIVYFTILLLHREKRD). Residues aspartate 399, 403–407 (CLAKY), and tyrosine 414 contribute to the NADP(+) site. Residues 400–427 (DAMCLAKYGEDWLQYRKKVPWRIVPKIY) are Cytoplasmic-facing.

The protein belongs to the ERG4/ERG24 family.

It is found in the cell inner membrane. It catalyses the reaction 4,4-dimethyl-5alpha-cholesta-8,24-dien-3beta-ol + NADP(+) = 4,4-dimethyl-5alpha-cholesta-8,14,24-trien-3beta-ol + NADPH + H(+). It participates in steroid biosynthesis; zymosterol biosynthesis; zymosterol from lanosterol. In terms of biological role, reduces the C14=C15 double bond of 4,4-dimethyl-cholesta-8,14,24-trienol to produce 4,4-dimethyl-cholesta-8,24-dienol. Complements the deletion of the Delta(14)-sterol reductase gene ERG24 in yeast. In Methylotuvimicrobium alcaliphilum (strain DSM 19304 / NCIMB 14124 / VKM B-2133 / 20Z) (Methylomicrobium alcaliphilum), this protein is Delta(14)-sterol reductase.